A 195-amino-acid polypeptide reads, in one-letter code: Iron-sulfur flavoprotein AF_1519 (195 aa).

[4Fe-4S] cluster is bound by residues Cys-45, Cys-48, Cys-51, and Cys-57.

The protein belongs to the SsuE family. Isf subfamily. As to quaternary structure, homodimer. The cofactor is FMN. Requires [4Fe-4S] cluster as cofactor.

Functionally, redox-active protein probably involved in electron transport. This is Iron-sulfur flavoprotein AF_1519 from Archaeoglobus fulgidus (strain ATCC 49558 / DSM 4304 / JCM 9628 / NBRC 100126 / VC-16).